Reading from the N-terminus, the 206-residue chain is Small ribosomal subunit protein uS4A (206 aa).

Residues 98–164 (MRLDNVVYKL…EKFKTFAENP (67 aa)) form the S4 RNA-binding domain.

The protein belongs to the universal ribosomal protein uS4 family. Part of the 30S ribosomal subunit. Contacts protein S5. The interaction surface between S4 and S5 is involved in control of translational fidelity.

Functionally, one of the primary rRNA binding proteins, it binds directly to 16S rRNA where it nucleates assembly of the body of the 30S subunit. With S5 and S12 plays an important role in translational accuracy. The sequence is that of Small ribosomal subunit protein uS4A from Clostridium novyi (strain NT).